Consider the following 456-residue polypeptide: UDP-N-acetylmuramoylalanine--D-glutamate ligase (456 aa).

An ATP-binding site is contributed by 113–119 (GTNGKTT).

This sequence belongs to the MurCDEF family.

The protein localises to the cytoplasm. It carries out the reaction UDP-N-acetyl-alpha-D-muramoyl-L-alanine + D-glutamate + ATP = UDP-N-acetyl-alpha-D-muramoyl-L-alanyl-D-glutamate + ADP + phosphate + H(+). It functions in the pathway cell wall biogenesis; peptidoglycan biosynthesis. In terms of biological role, cell wall formation. Catalyzes the addition of glutamate to the nucleotide precursor UDP-N-acetylmuramoyl-L-alanine (UMA). In Rippkaea orientalis (strain PCC 8801 / RF-1) (Cyanothece sp. (strain PCC 8801)), this protein is UDP-N-acetylmuramoylalanine--D-glutamate ligase.